The chain runs to 485 residues: Cys-Gly metallodipeptidase DUG1 (485 aa).

Histidine 109 is a Zn(2+) binding site. The active site involves aspartate 111. Position 144 (aspartate 144) interacts with Zn(2+). Glutamate 178 (proton acceptor) is an active-site residue. The Zn(2+) site is built by glutamate 179, aspartate 207, and histidine 457.

This sequence belongs to the peptidase M20A family. Homodimer. Component of the GSH degradosomal complex. Requires Zn(2+) as cofactor. The cofactor is Mn(2+).

Its subcellular location is the cytoplasm. In terms of biological role, catalytic component of the GSH degradosomal complex involved in the degradation of glutathione (GSH) and other peptides containing a gamma-glu-X bond. Also functions as a dipeptidase with high specificity for Cys-Gly and no activity toward tri- or tetrapeptides. This Candida albicans (strain SC5314 / ATCC MYA-2876) (Yeast) protein is Cys-Gly metallodipeptidase DUG1 (DUG1).